The following is a 625-amino-acid chain: Clathrin interactor 1 (625 aa).

In terms of domain architecture, ENTH spans 16-149; it reads NVVMNYSEIE…QDDDRLREER (134 aa). An a 1,2-diacyl-sn-glycero-3-phospho-(1D-myo-inositol-4,5-bisphosphate)-binding site is contributed by Arg29. Residues 52 to 54 form an interaction with VTI1B region; the sequence is FMY. A 1,2-diacyl-sn-glycero-3-phospho-(1D-myo-inositol-4,5-bisphosphate) is bound at residue Arg67. 2 interaction with VTI1B regions span residues 94 to 96 and 142 to 153; these read SER and DDRLREERKKAK. Residues Ser163, Ser166, Ser173, Ser205, Ser210, Ser227, Ser245, and Ser299 each carry the phosphoserine modification. The tract at residues 219–331 is disordered; that stretch reads FRRKDREDSP…SSGDLVDLFD (113 aa). Residues 222-239 show a composition bias toward basic and acidic residues; sequence KDREDSPERCSDSDEEKK. At Thr308 the chain carries Phosphothreonine. Over residues 308 to 323 the composition is skewed to low complexity; that stretch reads TPQSSVKTSVPSSKSS. A Phosphoserine modification is found at Ser312. Positions 340-352 are interaction with AP1G1, AP1G2 and GGA2; sequence SADLFGGFADFGS. Residues 368 to 380 form an interaction with AP1G1 and AP1G2 region; the sequence is GNGDFGDWSAFNQ. A Phosphoserine modification is found at Ser624.

The protein belongs to the epsin family. Binds clathrin heavy chain and AP-2. Interacts with VTI1B. Interacts with GGA2 (via GAE domain). Interacts with AP1G1 (via GAE domain). Interacts with AP1G2 (via GAE domain). As to expression, ubiquitously expressed at low to intermediate levels.

The protein localises to the cytoplasm. It is found in the perinuclear region. The protein resides in the membrane. Its subcellular location is the cytoplasmic vesicle. It localises to the clathrin-coated vesicle. Binds to membranes enriched in phosphatidylinositol 4,5-bisphosphate (PtdIns(4,5)P2). May have a role in transport via clathrin-coated vesicles from the trans-Golgi network to endosomes. Stimulates clathrin assembly. In Homo sapiens (Human), this protein is Clathrin interactor 1 (CLINT1).